We begin with the raw amino-acid sequence, 199 residues long: Chaperone protein TorD (199 aa).

It belongs to the TorD/DmsD family. TorD subfamily.

The protein localises to the cytoplasm. Involved in the biogenesis of TorA. Acts on TorA before the insertion of the molybdenum cofactor and, as a result, probably favors a conformation of the apoenzyme that is competent for acquiring the cofactor. This chain is Chaperone protein TorD, found in Escherichia coli O45:K1 (strain S88 / ExPEC).